The primary structure comprises 749 residues: Transcription factor RFX3 (749 aa).

A DNA-binding region (RFX-type winged-helix) is located at residues 183–258 (HLQWLLDNYE…YHYYGIRVKP (76 aa)). The disordered stretch occupies residues 663–699 (VSPGNLDKDEGSEVESEMDEELDDSSEPQAKREKTEL). Acidic residues predominate over residues 674–688 (SEVESEMDEELDDSS).

This sequence belongs to the RFX family. In terms of assembly, heterodimer; heterodimerizes with RFX1 and RFX2, and RFX6.

Its subcellular location is the nucleus. Functionally, transcription factor required for ciliogenesis and islet cell differentiation during endocrine pancreas development. Essential for the differentiation of nodal monocilia and left-right asymmetry specification during embryogenesis. Required for the biogenesis of motile cilia by governing growth and beating efficiency of motile cells. Also required for ciliated ependymal cell differentiation. Regulates the expression of genes involved in ciliary assembly (DYNC2LI1, FOXJ1 and BBS4) and genes involved in ciliary motility (DNAH11, DNAH9 and DNAH5). Together with RFX6, participates in the differentiation of 4 of the 5 islet cell types during endocrine pancreas development, with the exception of pancreatic PP (polypeptide-producing) cells. Regulates transcription by forming a heterodimer with another RFX protein and binding to the X-box in the promoter of target genes. Represses transcription of MAP1A in non-neuronal cells but not in neuronal cells. The polypeptide is Transcription factor RFX3 (RFX3) (Homo sapiens (Human)).